A 1009-amino-acid polypeptide reads, in one-letter code: UvrABC system protein A (1009 aa).

32–39 (GLSGSGKS) contributes to the ATP binding site. ABC transporter domains are found at residues 314–592 (WSHG…AESQ) and 612–941 (RDPS…KFLR). 645–652 (GVSGSGKS) provides a ligand contact to ATP. Residues 744 to 770 (CENCSGDGTIKIEMNFLPDVYVPCEVC) form a C4-type zinc finger. Residues 956 to 1009 (KAPRKTAARKTAAAKSTTKKTATVRTTNNTATKKAAAVTKKTAPAKKTTRARKA) form a disordered region. The span at 964–997 (RKTAAAKSTTKKTATVRTTNNTATKKAAAVTKKT) shows a compositional bias: low complexity. Over residues 998-1009 (APAKKTTRARKA) the composition is skewed to basic residues.

This sequence belongs to the ABC transporter superfamily. UvrA family. Forms a heterotetramer with UvrB during the search for lesions.

It is found in the cytoplasm. The UvrABC repair system catalyzes the recognition and processing of DNA lesions. UvrA is an ATPase and a DNA-binding protein. A damage recognition complex composed of 2 UvrA and 2 UvrB subunits scans DNA for abnormalities. When the presence of a lesion has been verified by UvrB, the UvrA molecules dissociate. In Streptomyces avermitilis (strain ATCC 31267 / DSM 46492 / JCM 5070 / NBRC 14893 / NCIMB 12804 / NRRL 8165 / MA-4680), this protein is UvrABC system protein A.